Reading from the N-terminus, the 345-residue chain is Aspartate--ammonia ligase (345 aa).

The protein belongs to the class-II aminoacyl-tRNA synthetase family. AsnA subfamily.

It is found in the cytoplasm. It carries out the reaction L-aspartate + NH4(+) + ATP = L-asparagine + AMP + diphosphate + H(+). The protein operates within amino-acid biosynthesis; L-asparagine biosynthesis; L-asparagine from L-aspartate (ammonia route): step 1/1. The polypeptide is Aspartate--ammonia ligase (Bacteroides fragilis (strain ATCC 25285 / DSM 2151 / CCUG 4856 / JCM 11019 / LMG 10263 / NCTC 9343 / Onslow / VPI 2553 / EN-2)).